A 583-amino-acid polypeptide reads, in one-letter code: Steryl-sulfatase (583 aa).

Positions 1 to 21 (MPLRKMKIPFLLLFFLWEAES) are cleaved as a signal peptide. Residues 22–184 (HAASRPNIIL…GSVFTTGFKR (163 aa)) lie on the Lumenal side of the membrane. Ca(2+) contacts are provided by Asp35 and Asp36. Asn47 is a glycosylation site (N-linked (GlcNAc...) asparagine). Cys75 contacts Ca(2+). Cys75 serves as the catalytic Nucleophile. 3-oxoalanine (Cys) is present on Cys75. His136 is an active-site residue. Cystine bridges form between Cys141–Cys148 and Cys170–Cys242. The helical transmembrane segment at 185 to 208 (LVFLPLQIVGVTLLTLAALNCLGL) threads the bilayer. Over 209 to 212 (LHVP) the chain is Cytoplasmic. The helical transmembrane segment at 213 to 234 (LGVFFSLLFLAALILTLFLGFL) threads the bilayer. The Lumenal portion of the chain corresponds to 235–583 (HYFRPLNCFM…REKQDKRLSR (349 aa)). Asn259 is a glycosylation site (N-linked (GlcNAc...) asparagine). Residues Asp342 and Gln343 each contribute to the Ca(2+) site. 4 disulfide bridges follow: Cys446–Cys489, Cys481–Cys487, Cys562–Cys570, and Cys563–Cys572.

This sequence belongs to the sulfatase family. As to quaternary structure, homodimer. Ca(2+) is required as a cofactor. The conversion to 3-oxoalanine (also known as C-formylglycine, FGly), of a serine or cysteine residue in prokaryotes and of a cysteine residue in eukaryotes, is critical for catalytic activity.

It is found in the cytoplasmic vesicle. The protein localises to the secretory vesicle. It localises to the microneme membrane. The protein resides in the endoplasmic reticulum membrane. It carries out the reaction dehydroepiandrosterone 3-sulfate + H2O = 3beta-hydroxyandrost-5-en-17-one + sulfate + H(+). The catalysed reaction is estrone 3-sulfate + H2O = estrone + sulfate + H(+). Catalyzes the conversion of sulfated steroid precursors, such as dehydroepiandrosterone sulfate (DHEA-S) and estrone sulfate to the free steroid. The chain is Steryl-sulfatase (STS) from Homo sapiens (Human).